A 918-amino-acid polypeptide reads, in one-letter code: Aconitase-ribosomal protein bL21m fusion protein (918 aa).

Residues 1 to 30 (MATFARMKLCLSGSSQAIPSKGISLVAARF) constitute a mitochondrion transit peptide. Positions 31–811 (QSTASRASYV…IDSIKQQPDH (781 aa)) are homocitrate dehydratase, mitochondrial. Residues Q105 and 198–200 (DSH) contribute to the substrate site. Positions 394, 457, and 460 each coordinate [4Fe-4S] cluster. Substrate-binding positions include R484, R489, K619, and 680 to 681 (AR). The large ribosomal subunit protein bL21m stretch occupies residues 812–918 (YADAYIFNRH…ILRVTELKLN (107 aa)).

It in the N-terminal section; belongs to the aconitase/IPM isomerase family. In the C-terminal section; belongs to the bacterial ribosomal protein bL21 family. In terms of assembly, component of the mitochondrial large ribosomal subunit (mt-LSU). Mature yeast 74S mitochondrial ribosomes consist of a small (37S) and a large (54S) subunit. The 37S small subunit contains a 15S ribosomal RNA (15S mt-rRNA) and at least 32 different proteins. The 54S large subunit contains a 21S rRNA (21S mt-rRNA) and at least 45 different proteins. It depends on [4Fe-4S] cluster as a cofactor.

The protein localises to the mitochondrion. It is found in the nucleus. It catalyses the reaction (2R)-homocitrate = cis-homoaconitate + H2O. It functions in the pathway amino-acid biosynthesis; L-lysine biosynthesis via AAA pathway; L-alpha-aminoadipate from 2-oxoglutarate: step 2/5. Catalyzes the reversible dehydration of (R)-homocitrate to cis-homoaconitate, a step in the alpha-aminoadipate pathway for lysine biosynthesis. Its function is as follows. Component of the mitochondrial ribosome (mitoribosome), a dedicated translation machinery responsible for the synthesis of mitochondrial genome-encoded proteins, including at least some of the essential transmembrane subunits of the mitochondrial respiratory chain. The mitoribosomes are attached to the mitochondrial inner membrane and translation products are cotranslationally integrated into the membrane. The sequence is that of Aconitase-ribosomal protein bL21m fusion protein (aco2) from Schizosaccharomyces pombe (strain 972 / ATCC 24843) (Fission yeast).